A 355-amino-acid polypeptide reads, in one-letter code: 3-dehydroquinate synthase (355 aa).

Residues 105 to 109, 129 to 130, K142, K151, and 169 to 172 each bind NAD(+); these read GVVGD, TS, and TLKT. The Zn(2+) site is built by E184, H246, and H263.

It belongs to the sugar phosphate cyclases superfamily. Dehydroquinate synthase family. NAD(+) serves as cofactor. Co(2+) is required as a cofactor. Requires Zn(2+) as cofactor.

It is found in the cytoplasm. It carries out the reaction 7-phospho-2-dehydro-3-deoxy-D-arabino-heptonate = 3-dehydroquinate + phosphate. The protein operates within metabolic intermediate biosynthesis; chorismate biosynthesis; chorismate from D-erythrose 4-phosphate and phosphoenolpyruvate: step 2/7. Functionally, catalyzes the conversion of 3-deoxy-D-arabino-heptulosonate 7-phosphate (DAHP) to dehydroquinate (DHQ). This is 3-dehydroquinate synthase from Streptococcus agalactiae serotype V (strain ATCC BAA-611 / 2603 V/R).